We begin with the raw amino-acid sequence, 334 residues long: Phosphoribosylformylglycinamidine cyclo-ligase (334 aa).

This sequence belongs to the AIR synthase family.

It localises to the cytoplasm. The catalysed reaction is 2-formamido-N(1)-(5-O-phospho-beta-D-ribosyl)acetamidine + ATP = 5-amino-1-(5-phospho-beta-D-ribosyl)imidazole + ADP + phosphate + H(+). The protein operates within purine metabolism; IMP biosynthesis via de novo pathway; 5-amino-1-(5-phospho-D-ribosyl)imidazole from N(2)-formyl-N(1)-(5-phospho-D-ribosyl)glycinamide: step 2/2. This Pyrococcus horikoshii (strain ATCC 700860 / DSM 12428 / JCM 9974 / NBRC 100139 / OT-3) protein is Phosphoribosylformylglycinamidine cyclo-ligase.